We begin with the raw amino-acid sequence, 163 residues long: Photosystem II extrinsic protein V (163 aa).

A signal peptide spans 1–26 (MFKKSYQFFALVLFSIFNVLVTSASA). Positions 63, 66, 67, and 118 each coordinate heme c.

This sequence belongs to the cytochrome c family. PsbV subfamily. In terms of assembly, PSII is composed of 1 copy each of membrane proteins PsbA, PsbB, PsbC, PsbD, PsbE, PsbF, PsbH, PsbI, PsbJ, PsbK, PsbL, PsbM, PsbT, PsbY, PsbZ, Psb30/Ycf12, at least 3 peripheral proteins of the oxygen-evolving complex and a large number of cofactors. It forms dimeric complexes. Requires heme c as cofactor.

It is found in the plastid. The protein localises to the chloroplast thylakoid membrane. Its function is as follows. One of the extrinsic, lumenal subunits of photosystem II (PSII). PSII is a light-driven water plastoquinone oxidoreductase, using light energy to abstract electrons from H(2)O, generating a proton gradient subsequently used for ATP formation. The extrinsic proteins stabilize the structure of photosystem II oxygen-evolving complex (OEC), the ion environment of oxygen evolution and protect the OEC against heat-induced inactivation. The protein is Photosystem II extrinsic protein V of Trieres chinensis (Marine centric diatom).